The chain runs to 306 residues: Ethylmalonyl-CoA decarboxylase (306 aa).

Lys-216 bears the N6-acetyllysine; alternate mark. Lys-216 carries the N6-succinyllysine; alternate modification.

The protein belongs to the enoyl-CoA hydratase/isomerase family.

The protein localises to the cytoplasm. It localises to the cytosol. The enzyme catalyses (2S)-ethylmalonyl-CoA + H(+) = butanoyl-CoA + CO2. The catalysed reaction is (S)-methylmalonyl-CoA + H(+) = propanoyl-CoA + CO2. It catalyses the reaction (2R)-ethylmalonyl-CoA + H(+) = butanoyl-CoA + CO2. In terms of biological role, decarboxylates ethylmalonyl-CoA, a potentially toxic metabolite, to form butyryl-CoA, suggesting it might be involved in metabolite proofreading. Acts preferentially on (S)-ethylmalonyl-CoA but also has some activity on the (R)-isomer. Also has methylmalonyl-CoA decarboxylase activity at lower level. In Bos taurus (Bovine), this protein is Ethylmalonyl-CoA decarboxylase (ECHDC1).